The following is a 435-amino-acid chain: Ras association domain-containing protein 9 (435 aa).

The disordered stretch occupies residues 1 to 22; the sequence is MAPFGRNLLKTRHKNRSPTKDM. Positions 25-119 constitute a Ras-associating domain; the sequence is EEKEIVVWVC…MQFVLVKADA (95 aa). The stretch at 195 to 290 forms a coiled coil; sequence HTIHQQVKRM…DKLSAEIEKE (96 aa). Residues 380-435 are disordered; sequence NRAKESEVPSSNGEIPPFTQRVFSNYTNDTDSDTGISSNHSQDSETTVGDVVLLST. Over residues 400-426 the composition is skewed to polar residues; sequence RVFSNYTNDTDSDTGISSNHSQDSETT.

Interacts with PAM.

Its subcellular location is the endosome. May play a role in regulating vesicuar trafficking in cells. The polypeptide is Ras association domain-containing protein 9 (RASSF9) (Homo sapiens (Human)).